Here is a 565-residue protein sequence, read N- to C-terminus: O-fucosyltransferase 7 (565 aa).

Residues 17 to 37 (VLIWAICVMTLLCFLTVHIYV) traverse the membrane as a helical; Signal-anchor for type II membrane protein segment. Residues Asn-62, Asn-73, Asn-104, Asn-124, and Asn-190 are each glycosylated (N-linked (GlcNAc...) asparagine). A substrate-binding site is contributed by 327 to 329 (HLR). N-linked (GlcNAc...) asparagine glycosylation occurs at Asn-441. Residues 515–565 (NEIHKTRQGSPRRRKGPASGTKGLERHRSEESFYENPLPDCLCQRDPSKAR) are disordered. Residues 520-530 (TRQGSPRRRKG) show a composition bias toward basic residues.

It belongs to the glycosyltransferase GT106 family.

The protein resides in the membrane. It participates in glycan metabolism. This chain is O-fucosyltransferase 7, found in Arabidopsis thaliana (Mouse-ear cress).